Here is a 93-residue protein sequence, read N- to C-terminus: Small ribosomal subunit protein uS19 (93 aa).

It belongs to the universal ribosomal protein uS19 family.

Functionally, protein S19 forms a complex with S13 that binds strongly to the 16S ribosomal RNA. The sequence is that of Small ribosomal subunit protein uS19 (rpsS) from Helicobacter pylori (strain ATCC 700392 / 26695) (Campylobacter pylori).